A 315-amino-acid chain; its full sequence is Glycine--tRNA ligase alpha subunit (315 aa).

This sequence belongs to the class-II aminoacyl-tRNA synthetase family. In terms of assembly, tetramer of two alpha and two beta subunits.

It is found in the cytoplasm. It catalyses the reaction tRNA(Gly) + glycine + ATP = glycyl-tRNA(Gly) + AMP + diphosphate. The protein is Glycine--tRNA ligase alpha subunit of Pseudomonas putida (strain W619).